Reading from the N-terminus, the 310-residue chain is MSSSTQIRPIAVVGPTASGKTAISLELAKLLDGEVVNIDSMQLYRGMDIGTAKVPPEERQGIPHHQLDIWPVTKPASVAEYRSGAIATVEEILSRGKMPIIVGGSMMYIQALVDEWDFPPTDPIVREKWQRELDVRGVAAMHQYLATIDPEAARIIEDNDPRRTVRALEVIELTGKPFAASQPPKNSTPRWNMRLLGLSAPAEWLNPRIEQRVRQMFDQGLVEEVRSLVADGLARTSTAGQAIGYAQVLDYFAGELTFEEAVDRTITGTRRYARRQRSWFRRDKRIIWIDANSPDPVRAATEALGIVSQQ.

An ATP-binding site is contributed by 14-21 (GPTASGKT). 16–21 (TASGKT) contacts substrate. The tract at residues 39 to 42 (DSMQ) is interaction with substrate tRNA.

Belongs to the IPP transferase family. As to quaternary structure, monomer. Mg(2+) serves as cofactor.

It catalyses the reaction adenosine(37) in tRNA + dimethylallyl diphosphate = N(6)-dimethylallyladenosine(37) in tRNA + diphosphate. In terms of biological role, catalyzes the transfer of a dimethylallyl group onto the adenine at position 37 in tRNAs that read codons beginning with uridine, leading to the formation of N6-(dimethylallyl)adenosine (i(6)A). In Corynebacterium jeikeium (strain K411), this protein is tRNA dimethylallyltransferase.